An 834-amino-acid chain; its full sequence is Semaphorin-4C (834 aa).

The signal sequence occupies residues 1-20 (MAPHWAVWLLAAGLWGLGIG). Over 21 to 664 (AEMWWNLVPR…EARAPLENLG (644 aa)) the chain is Extracellular. Residues 30–497 (RKTVSSGELV…SRSQLVQLSL (468 aa)) form the Sema domain. Positions 46 to 489 (SQTGIQDFLT…SKKVLFAGSR (444 aa)) are dominant negative effect on myogenic differentiation. Residues Cys-99 and Cys-110 are joined by a disulfide bond. N-linked (GlcNAc...) asparagine glycosylation is found at Asn-106 and Asn-121. 3 disulfide bridges follow: Cys-128–Cys-137, Cys-261–Cys-370, and Cys-285–Cys-330. N-linked (GlcNAc...) asparagine glycosylation is found at Asn-310 and Asn-419. Positions 499 to 552 (DCTKYRFCVDCVLARDPYCAWNVNTSRCVATTSGRSGSFLVQHVANLDTSKMCN) constitute a PSI domain. 2 cysteine pairs are disulfide-bonded: Cys-500/Cys-517 and Cys-509/Cys-526. Residues Asn-522 and Asn-565 are each glycosylated (N-linked (GlcNAc...) asparagine). Residues 557 to 645 (KKVRSIPKNI…RLAAESYLVA (89 aa)) enclose the Ig-like C2-type domain. Cys-578 and Cys-628 are joined by a disulfide. A helical membrane pass occupies residues 665–685 (LVWLAVVALGAVCLVLLLLVL). Residues 686–834 (SLRRRLREEL…PDSNPEESSV (149 aa)) lie on the Cytoplasmic side of the membrane. Ser-743 is modified (phosphoserine). The interval 749-834 (GHARCQPGGG…PDSNPEESSV (86 aa)) is disordered. Residues 757 to 773 (GGPPSPPPGIPGQPLPS) are compositionally biased toward pro residues. The PDZ-binding signature appears at 831–834 (ESSV).

Belongs to the semaphorin family. As to quaternary structure, interacts (via the PDZ-binding motif) with GIPC (via the PDZ domain). Interacts with NCDN. Interacts (via the PDZ-binding motif) with DLG4. Interacts with PLXNB2. In terms of tissue distribution, predominantly expressed in brain (at protein level).

It localises to the postsynaptic density membrane. It is found in the cytoplasmic vesicle. The protein localises to the secretory vesicle. Its subcellular location is the synaptic vesicle membrane. Its function is as follows. Cell surface receptor for PLXNB2 that plays an important role in cell-cell signaling. PLXNB2 binding promotes downstream activation of RHOA and phosphorylation of ERBB2 at 'Tyr-1248'. Required for normal brain development, axon guidance and cell migration. Probable signaling receptor which may play a role in myogenic differentiation through activation of the stress-activated MAPK cascade. This Mus musculus (Mouse) protein is Semaphorin-4C (Sema4c).